Here is a 696-residue protein sequence, read N- to C-terminus: DEAD-box ATP-dependent RNA helicase 7 (696 aa).

The interval 1–116 is disordered; the sequence is MPSLPVAAAE…GDEDPADPNA (116 aa). A coiled-coil region spans residues 16-97; it reads ESASKKSKRK…KVVVEEEEED (82 aa). Positions 27-38 are enriched in basic and acidic residues; it reads KAAEVEVEASSR. Basic residues predominate over residues 39-49; sequence KKEKKEKKRKA. Positions 67 to 77 are enriched in low complexity; sequence STSSDEPAPAA. The segment covering 92–112 has biased composition (acidic residues); sequence EEEEEDDDEGELTASGDEDPA. The Q motif motif lies at 115–143; it reads NALANFRISESLREKLKSKGIKALFPIQA. One can recognise a Helicase ATP-binding domain in the interval 146–328; it reads FDLVLDGHDL…LRFLKSGKKT (183 aa). Residue 159–166 participates in ATP binding; it reads ARTGQGKT. Residues 274–277 carry the DEAD box motif; sequence DEAD. A Helicase C-terminal domain is found at 357–500; sequence QVIPDIIRCY…ISAPQPTDVA (144 aa). The tract at residues 641–696 is disordered; the sequence is LPPLQEREQSGGSRGGGRFGNRRFSGGGGGRGGGGRGFGGGRGRGGGGGNRFNKRY. Residues 652–690 are compositionally biased toward gly residues; that stretch reads GSRGGGRFGNRRFSGGGGGRGGGGRGFGGGRGRGGGGGN.

This sequence belongs to the DEAD box helicase family. DDX21/DDX50 subfamily.

It is found in the nucleus. The enzyme catalyses ATP + H2O = ADP + phosphate + H(+). This chain is DEAD-box ATP-dependent RNA helicase 7, found in Oryza sativa subsp. japonica (Rice).